Reading from the N-terminus, the 4499-residue chain is Dynein alpha chain, flagellar outer arm (4499 aa).

The interval 1 to 1677 is stem; sequence MSIFWEVPNA…RIRICDASFP (1677 aa). 6 Kelch repeats span residues 29 to 84, 86 to 135, 137 to 183, 199 to 245, 253 to 304, and 307 to 358; these read RFVL…ALDD, RLLV…RFGS, VFIF…RFDH, KLLI…VCDG, KVFS…FDVK, and SLLI…IRGL. A Filamin repeat occupies 425–534; the sequence is FANTAARNCI…IRGSPFTVKC (110 aa). 2 Kelch repeats span residues 562–608 and 610–661; these read ELVL…VLSD and ELVV…AVSA. The interval 653 to 720 is disordered; the sequence is PKGAAAVSAE…SRPVSAKPAP (68 aa). The segment covering 655 to 689 has biased composition (low complexity); that stretch reads GAAAVSAEPSAEPAAEPAAEPAAEPDADAPAAEPA. The segment covering 690–705 has biased composition (acidic residues); it reads AEGEEGAVPAEGEEGA. 2 Kelch repeats span residues 750–801 and 864–913; these read LYVM…ATGN and KLFL…TLSG. Coiled coils occupy residues 1261-1334 and 1382-1450; these read ELHK…MIAN and KKEL…RRAF. AAA stretches follow at residues 1678–1921 and 1981–2225; these read YGYE…VLVV and DVIV…KSYS. ATP contacts are provided by residues 1716–1723 and 2019–2026; these read GPAGTGKT and GPTGTGRT. The stretch at 2269 to 2317 is one Kelch 11 repeat; that stretch reads MIWAFGGGLVEKDGIPYRRNFDKWFKQTWTTVKIPGKGTVYDYFVNPKT. AAA stretches follow at residues 2331–2577 and 2679–2928; these read DYDG…VFQG and EYNE…ERRY. 2369–2376 is an ATP binding site; sequence GGAGVGKT. Residues 2655–2688 are a coiled coil; that stretch reads LADKAYDEVADYTSLYKTLTEALNEYNETNAAMD. 2717–2724 lines the ATP pocket; the sequence is GVGGSGKQ. Residues 3003–3023 adopt a coiled-coil conformation; it reads VGVEKEKVNAENAAAQVEAEK. Residues 3003–3262 are stalk; that stretch reads VGVEKEKVNA…ERWALTVEQL (260 aa). Residues 3070–3117 form a Kelch 12 repeat; it reads LKKPPPGVDDITAVVIILLENNPKDKSWQAAQKLMNNVDKFLERVKSF. 2 coiled-coil regions span residues 3170–3262 and 3486–3515; these read DVVQ…VEQL and NKER…ELED. Residues 3320–3550 form an AAA 5 region; the sequence is LVDDALVAGW…AKRVSTEISE (231 aa). The segment at 3614 to 3687 is disordered; it reads GRKKGKGLKK…VGDAEDEDDE (74 aa). Residues 3630 to 3653 show a composition bias toward basic and acidic residues; that stretch reads QPMDHQSLMEKARRSSGVGDRRPS. The segment at 3843–4082 is AAA 6; the sequence is LQNFCEHMMG…LTTCGDVLYN (240 aa).

This sequence belongs to the dynein heavy chain family. In terms of assembly, consists of at least 3 heavy chains (alpha, beta and gamma), 2 intermediate chains and 8 light chains.

The protein resides in the cell projection. It localises to the cilium. It is found in the flagellum. The protein localises to the cytoplasm. Its subcellular location is the cytoskeleton. The protein resides in the flagellum axoneme. In terms of biological role, force generating protein of eukaryotic cilia and flagella. Produces force towards the minus ends of microtubules. Dynein has ATPase activity; the force-producing power stroke is thought to occur on release of ADP. The protein is Dynein alpha chain, flagellar outer arm (ODA11) of Chlamydomonas reinhardtii (Chlamydomonas smithii).